We begin with the raw amino-acid sequence, 255 residues long: Homeobox protein DLX-1 (255 aa).

Residues 1–14 (MTMTTMPESLNSPV) are compositionally biased toward polar residues. 2 disordered regions span residues 1-38 (MTMT…MSHG) and 95-118 (SLAQ…EGGE). The segment covering 25–36 (PPNQQMSPSPMS) has biased composition (low complexity). Residues 100 to 112 (RLEDPGADSEKST) show a composition bias toward basic and acidic residues. Residues 128 to 187 (IRKPRTIYSSLQLQALNRRFQQTQYLALPERAELAASLGLTQTQVKIWFQNKRSKFKKLM) constitute a DNA-binding region (homeobox). The segment at 204–230 (ALSAGSPPVPPGWNPNSSSGKGSGGNA) is disordered.

This sequence belongs to the distal-less homeobox family. Interacts with SMAD4 (via homeobox DNA-binding domain). Interacts (via homeobox DNA-binding domain) with POU4F2; this interaction suppresses DLX1-mediated transcriptional activity in postnatal retina and enhances retinal ganglion cell (RGC) differentiation. As to expression, expressed in hematopoietic cell lines.

It is found in the nucleus. Its function is as follows. Plays a role as a transcriptional activator or repressor. Inhibits several cytokine signaling pathways, such as TGFB1, activin-A/INHBA and BMP4 by interfering with the transcriptional stimulatory activity of transcription factors, such as MSX2, FAST2, SMAD2 and SMAD3 during hematopoietic cell differentiation. Plays a role in terminal differentiation of interneurons, such as amacrine and bipolar cells in the developing retina. Likely to play a regulatory role in the development of the ventral forebrain. May play a role in craniofacial patterning and morphogenesis and may be involved in the early development of diencephalic subdivisions. The sequence is that of Homeobox protein DLX-1 (DLX1) from Homo sapiens (Human).